A 331-amino-acid chain; its full sequence is NADH-cytochrome b5 reductase 2 (331 aa).

A helical membrane pass occupies residues 36 to 56 (VGILIASAVGMAGFGTYFMFG). The FAD-binding FR-type domain occupies 80-185 (KGFVSLQLDD…KGPLPKYEWS (106 aa)). An FAD-binding site is contributed by 188–223 (KHPHVAMIAGGTGITPMYQIMRAIFKNPADKTKVTL).

Belongs to the flavoprotein pyridine nucleotide cytochrome reductase family. Requires FAD as cofactor.

It localises to the mitochondrion outer membrane. The enzyme catalyses 2 Fe(III)-[cytochrome b5] + NADH = 2 Fe(II)-[cytochrome b5] + NAD(+) + H(+). In terms of biological role, may mediate the reduction of outer membrane cytochrome b5. The chain is NADH-cytochrome b5 reductase 2 (MCR1) from Pyricularia oryzae (strain 70-15 / ATCC MYA-4617 / FGSC 8958) (Rice blast fungus).